Consider the following 341-residue polypeptide: Ribosomal RNA small subunit methyltransferase C (341 aa).

It belongs to the methyltransferase superfamily. RsmC family. Monomer.

It is found in the cytoplasm. It catalyses the reaction guanosine(1207) in 16S rRNA + S-adenosyl-L-methionine = N(2)-methylguanosine(1207) in 16S rRNA + S-adenosyl-L-homocysteine + H(+). Specifically methylates the guanine in position 1207 of 16S rRNA in the 30S particle. The sequence is that of Ribosomal RNA small subunit methyltransferase C from Shewanella amazonensis (strain ATCC BAA-1098 / SB2B).